Reading from the N-terminus, the 117-residue chain is UPF0102 protein RSKD131_0118 (117 aa).

Belongs to the UPF0102 family.

This chain is UPF0102 protein RSKD131_0118, found in Cereibacter sphaeroides (strain KD131 / KCTC 12085) (Rhodobacter sphaeroides).